The sequence spans 184 residues: PXMP2/4 family protein 3 (184 aa).

Positions Met1–Ala44 are cleaved as a signal peptide. A run of 3 helical transmembrane segments spans residues Val58 to Ile78, Ile97 to Ile117, and Leu159 to Ala179.

Belongs to the peroxisomal membrane protein PXMP2/4 family.

It is found in the membrane. This Dictyostelium discoideum (Social amoeba) protein is PXMP2/4 family protein 3.